Consider the following 259-residue polypeptide: Proteasome assembly chaperone 2 (259 aa).

Belongs to the PSMG2 family. As to quaternary structure, forms a heterodimer with psmg1. Post-translationally, degraded by the proteasome upon completion of 20S proteasome maturation.

The protein resides in the nucleus. Its function is as follows. Chaperone protein which promotes assembly of the 20S proteasome as part of a heterodimer with psmg1. The polypeptide is Proteasome assembly chaperone 2 (Xenopus laevis (African clawed frog)).